The primary structure comprises 691 residues: Germ cell nuclear acidic protein (691 aa).

Positions isoleucine 22–valine 25 match the SUMO interaction motif 1 (SIM) motif. Residues valine 25–threonine 488 form a disordered region. The segment covering serine 27–serine 36 has biased composition (low complexity). Positions cysteine 48 to serine 63 are enriched in polar residues. 3 short sequence motifs (SUMO interaction motif 1 (SIM)) span residues valine 76 to isoleucine 79, leucine 97 to isoleucine 100, and isoleucine 121 to serine 124. Positions glutamate 86–leucine 97 are enriched in basic and acidic residues. The span at serine 124–glutamate 333 shows a compositional bias: acidic residues. Positions glycine 467–threonine 488 are enriched in basic residues. The 156-residue stretch at valine 522–valine 677 folds into the SprT-like domain.

It belongs to the serine-aspartate repeat-containing protein (SDr) family. As to quaternary structure, interacts (via SIM domains) with SUMO2; this interaction allows the GCNA recruitment to DPCs sites. Interacts with TOP2A; this interaction allows the resolution of topoisomerase II (TOP2A) DNA-protein cross-links. Expressed in germ cells of the testis (at protein level). Detected in skeletal muscle, liver, kidney, pancreas, heart, lung and brain. Expressed throughout spermatogenesis, from spermatogonia to elongated spermatids, in normal adult testis (at protein level).

Its subcellular location is the nucleus. The protein resides in the PML body. The protein localises to the chromosome. Its function is as follows. May play a role in DNA-protein cross-links (DPCs) clearance through a SUMO-dependent recruitment to sites of DPCs, ensuring the genomic stability by protecting germ cells and early embryos from various sources of damage. Can resolve the topoisomerase II (TOP2A) DPCs. In Homo sapiens (Human), this protein is Germ cell nuclear acidic protein.